The sequence spans 426 residues: DNA primase DnaG (426 aa).

The 77-residue stretch at 165–241 (DEIIIVEGRA…DIDYVAKAPP (77 aa)) folds into the Toprim domain. Residues E171, D215, and D217 each contribute to the Mg(2+) site. The disordered stretch occupies residues 278-298 (PAVEERPQPPQPQPPAVQPVQ). Residues 285 to 294 (QPPQPQPPAV) are compositionally biased toward pro residues.

The protein belongs to the archaeal DnaG primase family. In terms of assembly, forms a ternary complex with MCM helicase and DNA. Component of the archaeal exosome complex. It depends on Mg(2+) as a cofactor.

The enzyme catalyses ssDNA + n NTP = ssDNA/pppN(pN)n-1 hybrid + (n-1) diphosphate.. Functionally, RNA polymerase that catalyzes the synthesis of short RNA molecules used as primers for DNA polymerase during DNA replication. Also part of the exosome, which is a complex involved in RNA degradation. Acts as a poly(A)-binding protein that enhances the interaction between heteromeric, adenine-rich transcripts and the exosome. The protein is DNA primase DnaG of Hyperthermus butylicus (strain DSM 5456 / JCM 9403 / PLM1-5).